We begin with the raw amino-acid sequence, 352 residues long: UPF0252 protein MJ1282 (352 aa).

It belongs to the UPF0252 family.

This chain is UPF0252 protein MJ1282, found in Methanocaldococcus jannaschii (strain ATCC 43067 / DSM 2661 / JAL-1 / JCM 10045 / NBRC 100440) (Methanococcus jannaschii).